Consider the following 247-residue polypeptide: Probable transcriptional regulatory protein Dalk_2958 (247 aa).

Belongs to the TACO1 family.

The protein localises to the cytoplasm. The polypeptide is Probable transcriptional regulatory protein Dalk_2958 (Desulfatibacillum aliphaticivorans).